A 51-amino-acid polypeptide reads, in one-letter code: Insulin-1 (51 aa).

Cystine bridges form between cysteine 8-cysteine 37, cysteine 20-cysteine 50, and cysteine 36-cysteine 41.

Belongs to the insulin family. In terms of assembly, heterodimer of a B chain and an A chain linked by two disulfide bonds.

It localises to the secreted. In terms of biological role, insulin decreases blood glucose concentration. It increases cell permeability to monosaccharides, amino acids and fatty acids. It accelerates glycolysis, the pentose phosphate cycle, and glycogen synthesis in liver. This is Insulin-1 (ins1) from Batrachoididae sp. (Toadfish).